A 613-amino-acid polypeptide reads, in one-letter code: WD40 repeat-containing protein HOS15 (613 aa).

The LisH domain maps to 5–37 (TSVELNFLVFRYLQESGFTHAAFTLGYEAGINK). 2 disordered regions span residues 101–174 (KKRK…REKM) and 193–214 (EIEREREREKIEREKSHEKQLG). WD repeat units lie at residues 263–302 (GHTSEVCACAWSPSASLLASGSGDATARIWSIPEGSFKAV), 322–362 (EKSK…STLS), 363–402 (KHKGPIFSLKWNKKGDYLLTGSVDRTAVVWDVKAEEWKQQ), 405–443 (FHSGPTLDVDWRNNVSFATSSTDSMIYLCKIGETRPAKT), 446–485 (GHQGEVNCVKWDPTGSLLASCSDDSTAKIWNIKQSTFVHD), 488–536 (EHTK…MLCS), 539–580 (GHRE…KTYT), and 582–613 (NGGIFEVCWNKEGNKIAACFADNSVCVLDFRM).

The protein resides in the nucleus. Its function is as follows. Acts as a repressor of cold stress-regulated gene expression. Interacts specifically with and promotes deacetylation of histone H4. Plays a role in gene regulation for plant acclimation and tolerance to cold stress. The protein is WD40 repeat-containing protein HOS15 of Arabidopsis thaliana (Mouse-ear cress).